The following is a 262-amino-acid chain: Small ribosomal subunit protein uS3 (262 aa).

In terms of domain architecture, KH type-2 spans 38–106 (LRKIIAKELE…KVKLNIQEIH (69 aa)). The interval 211-262 (KGQTQLPQPAVAAARPGLTVEEEERPQRKGGRGGRGANAGAARGGRGGRSRS) is disordered. Gly residues predominate over residues 243 to 255 (GGRGANAGAARGG).

This sequence belongs to the universal ribosomal protein uS3 family. Part of the 30S ribosomal subunit. Forms a tight complex with proteins S10 and S14.

Functionally, binds the lower part of the 30S subunit head. Binds mRNA in the 70S ribosome, positioning it for translation. This is Small ribosomal subunit protein uS3 from Roseiflexus sp. (strain RS-1).